The primary structure comprises 785 residues: Polyribonucleotide nucleotidyltransferase (785 aa).

2 residues coordinate Mg(2+): aspartate 516 and aspartate 522. One can recognise a KH domain in the interval 582–641 (PRVTTVKIPVDKIGMVIGPKGQTINAIQDETGAEISIEDDGTIYVGATNGPAAQAAVERI). The S1 motif domain maps to 653-722 (GDRFLGTVVK…QRGKIYLDKV (70 aa)). The tract at residues 722–785 (VRPEGAEAPA…SRPRRRTRRS (64 aa)) is disordered. Residues 734 to 764 (AAERPAGRDRGDRGPRDRGDRGGRGPDRGDS) show a composition bias toward basic and acidic residues.

The protein belongs to the polyribonucleotide nucleotidyltransferase family. Mg(2+) is required as a cofactor.

The protein localises to the cytoplasm. The catalysed reaction is RNA(n+1) + phosphate = RNA(n) + a ribonucleoside 5'-diphosphate. Involved in mRNA degradation. Catalyzes the phosphorolysis of single-stranded polyribonucleotides processively in the 3'- to 5'-direction. This is Polyribonucleotide nucleotidyltransferase from Salinispora tropica (strain ATCC BAA-916 / DSM 44818 / JCM 13857 / NBRC 105044 / CNB-440).